Here is a 287-residue protein sequence, read N- to C-terminus: Carbon monoxide dehydrogenase medium chain (287 aa).

The FAD-binding PCMH-type domain maps to 1-177 (MIPPRFEYHA…VEIRVPAFAQ (177 aa)). FAD contacts are provided by residues 32 to 36 (AGGHS) and 111 to 115 (TIGGD).

In terms of assembly, dimer of heterotrimers. Each heterotrimer consists of a large, a medium and a small subunit. The cofactor is FAD.

It carries out the reaction CO + a quinone + H2O = a quinol + CO2. In terms of biological role, catalyzes the oxidation of carbon monoxide to carbon dioxide. The sequence is that of Carbon monoxide dehydrogenase medium chain (cutM) from Hydrogenophaga pseudoflava (Pseudomonas carboxydoflava).